The following is a 537-amino-acid chain: Cytochrome bd ubiquinol oxidase subunit 1 (537 aa).

At 1–24 the chain is on the cytoplasmic side; it reads MISESVVDLSRLQFAMTALYHFLF. Histidine 21 provides a ligand contact to heme b. Residues 25–44 form a helical membrane-spanning segment; sequence VPLTLGMTFLLAIMESVYVM. Residues 45 to 96 are Periplasmic-facing; that stretch reads TGKQVYKDMVKFWGKLFGINFALGVTTGITMEFQFGTNWAYYSHYVGDIFGA. Residues 97 to 116 traverse the membrane as a helical segment; the sequence is PLAIEGLTAFFLESTFIGMF. Topologically, residues 117–131 are cytoplasmic; it reads FFGWDRLSKIQHLAV. A helical membrane pass occupies residues 132-151; the sequence is TWLVALGSNLSALWILVANG. Residues 152 to 189 lie on the Periplasmic side of the membrane; that stretch reads WMQHPVGAEFNFETMRMELVDFGALLLNPVAQVKFVHT. Residue histidine 188 coordinates heme b. The helical transmembrane segment at 190–209 threads the bilayer; that stretch reads VASGYVTGAVFVLAISSYYL. At 210–221 the chain is on the cytoplasmic side; that stretch reads LKKRDLGFARRS. The chain crosses the membrane as a helical span at residues 222 to 241; the sequence is FAIASAFGMASILSVIVLGD. Residues 242-394 are Periplasmic-facing; the sequence is ESGYEVGEVQ…VASMFWSFRA (153 aa). Methionine 395 contributes to the heme b binding site. The helical transmembrane segment at 395 to 414 threads the bilayer; that stretch reads MVGAGFAMLILFVCAFWASA. The Cytoplasmic segment spans residues 415–472; the sequence is RKNEESKPWLLKFALYSLPLPWIATQTGWFVAEHGRQPWTIGGVLPTHLSASSLSTGD. Residues 473–492 traverse the membrane as a helical segment; that stretch reads LWGSLIALIAFYTLLLVVEM. The Periplasmic segment spans residues 493-537; the sequence is YLMIRFARLGPSSLHTGRYHFEQLEQHAVKHASPSQADPQQPVNA.

Belongs to the cytochrome ubiquinol oxidase subunit 1 family. In terms of assembly, heterodimer of subunits I and II. It depends on heme b as a cofactor. Requires heme d cis-diol as cofactor.

It is found in the cell inner membrane. The enzyme catalyses 2 a ubiquinol + O2(in) + 4 H(+)(in) = 2 a ubiquinone + 2 H2O(in) + 4 H(+)(out). In terms of biological role, may be involved in maintaining the low intracellular oxygen concentration required for nitrogen fixation. The protein is Cytochrome bd ubiquinol oxidase subunit 1 (cydA) of Azotobacter vinelandii.